A 363-amino-acid polypeptide reads, in one-letter code: DNA replication and repair protein RecF (363 aa).

Gly-30–Ser-37 contributes to the ATP binding site.

This sequence belongs to the RecF family.

It is found in the cytoplasm. In terms of biological role, the RecF protein is involved in DNA metabolism; it is required for DNA replication and normal SOS inducibility. RecF binds preferentially to single-stranded, linear DNA. It also seems to bind ATP. This is DNA replication and repair protein RecF from Pseudoalteromonas atlantica (strain T6c / ATCC BAA-1087).